A 490-amino-acid polypeptide reads, in one-letter code: Glutamate--tRNA ligase 2 (490 aa).

The 'HIGH' region signature appears at 33–43 (PSPTGYLHIGG). The short motif at 262 to 266 (KLSKR) is the 'KMSKS' region element. Lys-265 contributes to the ATP binding site.

The protein belongs to the class-I aminoacyl-tRNA synthetase family. Glutamate--tRNA ligase type 1 subfamily. In terms of assembly, monomer.

It is found in the cytoplasm. It carries out the reaction tRNA(Glu) + L-glutamate + ATP = L-glutamyl-tRNA(Glu) + AMP + diphosphate. Its function is as follows. Catalyzes the attachment of glutamate to tRNA(Glu) in a two-step reaction: glutamate is first activated by ATP to form Glu-AMP and then transferred to the acceptor end of tRNA(Glu). The protein is Glutamate--tRNA ligase 2 of Parvibaculum lavamentivorans (strain DS-1 / DSM 13023 / NCIMB 13966).